Reading from the N-terminus, the 228-residue chain is Cytidylate kinase (228 aa).

10–18 (GPSGSGKGT) contributes to the ATP binding site.

This sequence belongs to the cytidylate kinase family. Type 1 subfamily.

It is found in the cytoplasm. It catalyses the reaction CMP + ATP = CDP + ADP. The enzyme catalyses dCMP + ATP = dCDP + ADP. The chain is Cytidylate kinase from Acinetobacter baumannii (strain AB0057).